A 193-amino-acid polypeptide reads, in one-letter code: MANMNALQQMIFPDENAPIHRKKSVTAASVKSKGTVLGQKKPGGARKALNDITNKSGIHAKAAASSKNKQIASAAVKEIDIAGERFLHDHSKCIKEQQNLWDDHYSADLMLLHHGSSIKEKHLNWDIEKMDAKDDLTYEEPEEMASPKFSDWLKNSTPWRSPIRHGSMMPSTPLAWRFDSCEFTLKEDSDDLF.

The DEN-box motif lies at 14–16 (DEN). The D-box signature appears at 46-49 (RKAL).

As to quaternary structure, interacts directly with the anaphase promoting complex/cyclosome (APC/C) through the CDC27B and CDC20-1 subunits. As to expression, expressed in somatic and reproductive tissues. Expressed in inflorescence, young buds, roots and basal portion of young leaves. Expressed in proliferating cells such as apical meristems of roots and shoots, expanding cotyledons and leaves, root vascular tissues, and in stomatal precursor cells.

It is found in the nucleus. The protein localises to the cytoplasm. Its function is as follows. Required for the maintenance of centromeric cohesion during interkinesis, until meiosis II. Required for regular configuration and segregation of sister chromatids in meiosis II. Also required for centromere cohesion during meiosis I. Involved in spindle organization at the end of telophase I and in meiosis II. Required to prevent precocious release of pericentromeric cohesins during meiosis, but not for cohesion establishment and monopolar orientation of kinetochores at meiosis I. Involved also in somatic development. Regulates mitotic cell division and ploidy stability in somatic cell types. May be involved in the organization of microtubules dynamics. Involved in abiotic stresses and mono- or divalent ions tolerance and may play a role in maintaining meristematic activity under saline conditions. PANS1 and GIG1 are part of a network linking centromere cohesion and cell cycle progression through control of APC/C activity. Regulates the number of dividing cells in root meristem and is necessary for the anaphase onset control through an APC/C-mediated pathway. Involved in maintaining correct chromosome arm cohesion under stress conditions. The protein is Protein PATRONUS 1 of Arabidopsis thaliana (Mouse-ear cress).